The primary structure comprises 369 residues: Queuine tRNA-ribosyltransferase (369 aa).

The active-site Proton acceptor is Asp89. Residues 89–93 (DSGGF), Asp143, Gln187, and Gly214 each bind substrate. The segment at 245–251 (GVGTPED) is RNA binding. The active-site Nucleophile is the Asp264. Residues 269–273 (TRNAR) form an RNA binding; important for wobble base 34 recognition region. Zn(2+)-binding residues include Cys302, Cys304, Cys307, and His333.

Belongs to the queuine tRNA-ribosyltransferase family. Homodimer. Within each dimer, one monomer is responsible for RNA recognition and catalysis, while the other monomer binds to the replacement base PreQ1. It depends on Zn(2+) as a cofactor.

It catalyses the reaction 7-aminomethyl-7-carbaguanine + guanosine(34) in tRNA = 7-aminomethyl-7-carbaguanosine(34) in tRNA + guanine. The protein operates within tRNA modification; tRNA-queuosine biosynthesis. Functionally, catalyzes the base-exchange of a guanine (G) residue with the queuine precursor 7-aminomethyl-7-deazaguanine (PreQ1) at position 34 (anticodon wobble position) in tRNAs with GU(N) anticodons (tRNA-Asp, -Asn, -His and -Tyr). Catalysis occurs through a double-displacement mechanism. The nucleophile active site attacks the C1' of nucleotide 34 to detach the guanine base from the RNA, forming a covalent enzyme-RNA intermediate. The proton acceptor active site deprotonates the incoming PreQ1, allowing a nucleophilic attack on the C1' of the ribose to form the product. After dissociation, two additional enzymatic reactions on the tRNA convert PreQ1 to queuine (Q), resulting in the hypermodified nucleoside queuosine (7-(((4,5-cis-dihydroxy-2-cyclopenten-1-yl)amino)methyl)-7-deazaguanosine). The polypeptide is Queuine tRNA-ribosyltransferase (Dechloromonas aromatica (strain RCB)).